A 253-amino-acid polypeptide reads, in one-letter code: MITKRIIPCLDVDMGRVVKGVNFVNLKDVGDPVEIAEFYNKEGADEIVFLDISATHEGRATMIDVVRKTAEKLFIPLTVGGGIKNINDFKDILRAGADKISVNSSAIRNPKLIKKAAECFGSQCVVVAIDGKKRKDKDGWNVFINGGRIDTGLDAIEWARKVEKLGAGEILLTSMDADGTKEGYDLELTNEVSKAVNIPVIASGGCGKLKHFGEIFEKSSADAALAASLFHFKELSIKEVKNYLKEEGFSVRL.

Catalysis depends on residues Asp-11 and Asp-130.

It belongs to the HisA/HisF family. Heterodimer of HisH and HisF.

The protein localises to the cytoplasm. It carries out the reaction 5-[(5-phospho-1-deoxy-D-ribulos-1-ylimino)methylamino]-1-(5-phospho-beta-D-ribosyl)imidazole-4-carboxamide + L-glutamine = D-erythro-1-(imidazol-4-yl)glycerol 3-phosphate + 5-amino-1-(5-phospho-beta-D-ribosyl)imidazole-4-carboxamide + L-glutamate + H(+). The protein operates within amino-acid biosynthesis; L-histidine biosynthesis; L-histidine from 5-phospho-alpha-D-ribose 1-diphosphate: step 5/9. In terms of biological role, IGPS catalyzes the conversion of PRFAR and glutamine to IGP, AICAR and glutamate. The HisF subunit catalyzes the cyclization activity that produces IGP and AICAR from PRFAR using the ammonia provided by the HisH subunit. This Clostridium botulinum (strain Okra / Type B1) protein is Imidazole glycerol phosphate synthase subunit HisF.